Here is a 558-residue protein sequence, read N- to C-terminus: TNF receptor-associated factor 5 (558 aa).

Residues 45–85 form an RING-type zinc finger; the sequence is CAFCHSVLHNPHQTGCGHRFCQQCIRSLRELNSVPICPVDK. 2 TRAF-type zinc fingers span residues 127–181 and 182–239; these read DHLQ…TNLQ and DHEE…GNLL. Positions 252–302 form a coiled coil; the sequence is LVLEKNYQLEQRISDLYQSLEQKESKIQQLAETVKKFEKELKQFTQMFGRN. Residue lysine 318 forms a Glycyl lysine isopeptide (Lys-Gly) (interchain with G-Cter in ubiquitin) linkage. Positions 340–400 form a coiled coil; the sequence is LDLRSLVDAV…EERFKQLEGA (61 aa). The segment at 345–558 is interaction with EIF2AK2/PKR; sequence LVDAVDSVKQ…AVDLTDLEDL (214 aa). In terms of domain architecture, MATH spans 403-550; the sequence is SGKLIWKVTD…DDTLFLKVAV (148 aa).

It belongs to the TNF receptor-associated factor family. A subfamily. As to quaternary structure, homotrimer. Heterotrimer with TRAF3. Associates with TNFRSF5/CD40 through interaction with TRAF3. Associates with LTBR/TNFRSF3, TNFRSF4, TNFRSF8/CD30, TNFRSF11A/RANK, TNFRSF13B/TACI, TNFRSF14, TNFRSF17, TNFRSF19/TROY, RIPK2, MAP3K14, MAP3K5, and TRAF and TNF receptor associated protein TDP2. Interacts (via C-terminus) with EIF2AK2/PKR (via the kinase catalytic domain). Ubiquitinated at Lys-318 by the SCF(FBXL2) complex, leading to its degradation by the proteasome.

The protein resides in the cytoplasm. It localises to the cytosol. Its function is as follows. Adapter protein and signal transducer that links members of the tumor necrosis factor receptor family to different signaling pathways by association with the receptor cytoplasmic domain and kinases. Mediates activation of NF-kappa-B and probably JNK. Seems to be involved in apoptosis. Plays a role in mediating activation of NF-kappa-B by EIF2AK2/PKR. The polypeptide is TNF receptor-associated factor 5 (Traf5) (Mus musculus (Mouse)).